We begin with the raw amino-acid sequence, 450 residues long: Tubulin alpha chain (450 aa).

Gln11 lines the GTP pocket. Lys40 is modified (N6-acetyllysine). GTP is bound by residues Glu71, Ser140, Gly144, Thr145, Thr179, Asn206, and Asn228. Residue Glu71 participates in Mg(2+) binding. Residue Glu254 is part of the active site. The disordered stretch occupies residues 431-450 (DYEEVGTDSVGEEDEEGEEY).

The protein belongs to the tubulin family. In terms of assembly, dimer of alpha and beta chains. A typical microtubule is a hollow water-filled tube with an outer diameter of 25 nm and an inner diameter of 15 nM. Alpha-beta heterodimers associate head-to-tail to form protofilaments running lengthwise along the microtubule wall with the beta-tubulin subunit facing the microtubule plus end conferring a structural polarity. Microtubules usually have 13 protofilaments but different protofilament numbers can be found in some organisms and specialized cells. Requires Mg(2+) as cofactor. Post-translationally, some glutamate residues at the C-terminus are polyglycylated, resulting in polyglycine chains on the gamma-carboxyl group. Glycylation is mainly limited to tubulin incorporated into axonemes (cilia and flagella) whereas glutamylation is prevalent in neuronal cells, centrioles, axonemes, and the mitotic spindle. Both modifications can coexist on the same protein on adjacent residues, and lowering polyglycylation levels increases polyglutamylation, and reciprocally. The precise function of polyglycylation is still unclear. Some glutamate residues at the C-terminus are polyglutamylated, resulting in polyglutamate chains on the gamma-carboxyl group. Polyglutamylation plays a key role in microtubule severing by spastin (SPAST). SPAST preferentially recognizes and acts on microtubules decorated with short polyglutamate tails: severing activity by SPAST increases as the number of glutamates per tubulin rises from one to eight, but decreases beyond this glutamylation threshold. In terms of processing, acetylation of alpha chains at Lys-40 is located inside the microtubule lumen. This modification has been correlated with increased microtubule stability, intracellular transport and ciliary assembly. Post-translationally, undergoes a tyrosination/detyrosination cycle, the cyclic removal and re-addition of a C-terminal tyrosine residue by the enzymes tubulin tyrosine carboxypeptidase (MATCAP, VASH1 or VASH2) and tubulin tyrosine ligase (TTL), respectively. Tyrosination promotes microtubule interaction with CAP-Gly microtubule plus-end tracking proteins. Tyrosinated tubulins regulate the initiation of dynein-driven motility. In terms of processing, detyrosination is involved in metaphase plate congression by guiding chromosomes during mitosis. Detyrosination increases microtubules-dependent mechanotransduction in dystrophic cardiac and skeletal muscle. In cardiomyocytes, detyrosinated microtubules are required to resist to contractile compression during contraction.

It localises to the cytoplasm. It is found in the cytoskeleton. The enzyme catalyses GTP + H2O = GDP + phosphate + H(+). Tubulin is the major constituent of microtubules, a cylinder consisting of laterally associated linear protofilaments composed of alpha- and beta-tubulin heterodimers. Microtubules grow by the addition of GTP-tubulin dimers to the microtubule end, where a stabilizing cap forms. Below the cap, tubulin dimers are in GDP-bound state, owing to GTPase activity of alpha-tubulin. This Oncorhynchus keta (Chum salmon) protein is Tubulin alpha chain.